The following is a 307-amino-acid chain: Ribonuclease Z (307 aa).

His-63, His-65, Asp-67, His-68, His-141, Asp-212, and His-270 together coordinate Zn(2+). Catalysis depends on Asp-67, which acts as the Proton acceptor.

This sequence belongs to the RNase Z family. As to quaternary structure, homodimer. It depends on Zn(2+) as a cofactor.

It carries out the reaction Endonucleolytic cleavage of RNA, removing extra 3' nucleotides from tRNA precursor, generating 3' termini of tRNAs. A 3'-hydroxy group is left at the tRNA terminus and a 5'-phosphoryl group is left at the trailer molecule.. Zinc phosphodiesterase, which displays some tRNA 3'-processing endonuclease activity. Probably involved in tRNA maturation, by removing a 3'-trailer from precursor tRNA. This chain is Ribonuclease Z, found in Bacillus mycoides (strain KBAB4) (Bacillus weihenstephanensis).